The following is a 243-amino-acid chain: rRNA adenine N-6-methyltransferase (243 aa).

The S-adenosyl-L-methionine site is built by asparagine 11, isoleucine 13, glycine 38, glutamate 59, aspartate 84, and asparagine 101.

This sequence belongs to the class I-like SAM-binding methyltransferase superfamily. rRNA adenine N(6)-methyltransferase family.

The catalysed reaction is adenosine(2085) in 23S rRNA + 2 S-adenosyl-L-methionine = N(6)-dimethyladenosine(2085) in 23S rRNA + 2 S-adenosyl-L-homocysteine + 2 H(+). This protein produces a dimethylation of the adenine residue at position 2085 in 23S rRNA, resulting in reduced affinity between ribosomes and macrolide-lincosamide-streptogramin B antibiotics. In Staphylococcus aureus (strain Mu50 / ATCC 700699), this protein is rRNA adenine N-6-methyltransferase (ermA1).